The primary structure comprises 227 residues: Cytochrome c oxidase subunit 2 (227 aa).

Residues 1–14 (MAYPFQLGLQDATS) are Mitochondrial intermembrane-facing. Residues 15-45 (PIMEELLHFHDHTLMIVFLISSLVLYIISLM) traverse the membrane as a helical segment. Residues 46-59 (LTTKLTHTSTMDAQ) are Mitochondrial matrix-facing. The chain crosses the membrane as a helical span at residues 60-87 (EVETVWTILPAIILILIALPSLRILYMM). Over 88–227 (DEINNPSLTV…YFETWSALMV (140 aa)) the chain is Mitochondrial intermembrane. Cu cation is bound by residues H161, C196, E198, C200, H204, and M207. E198 provides a ligand contact to Mg(2+). At Y218 the chain carries Phosphotyrosine.

Belongs to the cytochrome c oxidase subunit 2 family. As to quaternary structure, component of the cytochrome c oxidase (complex IV, CIV), a multisubunit enzyme composed of 14 subunits. The complex is composed of a catalytic core of 3 subunits MT-CO1, MT-CO2 and MT-CO3, encoded in the mitochondrial DNA, and 11 supernumerary subunits COX4I, COX5A, COX5B, COX6A, COX6B, COX6C, COX7A, COX7B, COX7C, COX8 and NDUFA4, which are encoded in the nuclear genome. The complex exists as a monomer or a dimer and forms supercomplexes (SCs) in the inner mitochondrial membrane with NADH-ubiquinone oxidoreductase (complex I, CI) and ubiquinol-cytochrome c oxidoreductase (cytochrome b-c1 complex, complex III, CIII), resulting in different assemblies (supercomplex SCI(1)III(2)IV(1) and megacomplex MCI(2)III(2)IV(2)). Found in a complex with TMEM177, COA6, COX18, COX20, SCO1 and SCO2. Interacts with TMEM177 in a COX20-dependent manner. Interacts with COX20. Interacts with COX16. The cofactor is Cu cation.

It localises to the mitochondrion inner membrane. It carries out the reaction 4 Fe(II)-[cytochrome c] + O2 + 8 H(+)(in) = 4 Fe(III)-[cytochrome c] + 2 H2O + 4 H(+)(out). Component of the cytochrome c oxidase, the last enzyme in the mitochondrial electron transport chain which drives oxidative phosphorylation. The respiratory chain contains 3 multisubunit complexes succinate dehydrogenase (complex II, CII), ubiquinol-cytochrome c oxidoreductase (cytochrome b-c1 complex, complex III, CIII) and cytochrome c oxidase (complex IV, CIV), that cooperate to transfer electrons derived from NADH and succinate to molecular oxygen, creating an electrochemical gradient over the inner membrane that drives transmembrane transport and the ATP synthase. Cytochrome c oxidase is the component of the respiratory chain that catalyzes the reduction of oxygen to water. Electrons originating from reduced cytochrome c in the intermembrane space (IMS) are transferred via the dinuclear copper A center (CU(A)) of subunit 2 and heme A of subunit 1 to the active site in subunit 1, a binuclear center (BNC) formed by heme A3 and copper B (CU(B)). The BNC reduces molecular oxygen to 2 water molecules using 4 electrons from cytochrome c in the IMS and 4 protons from the mitochondrial matrix. The sequence is that of Cytochrome c oxidase subunit 2 (MT-CO2) from Urocyon cinereoargenteus (Gray fox).